Here is a 239-residue protein sequence, read N- to C-terminus: Pyridoxine 5'-phosphate synthase (239 aa).

Asn-7 lines the 3-amino-2-oxopropyl phosphate pocket. 9–10 (DH) is a 1-deoxy-D-xylulose 5-phosphate binding site. Residue Arg-18 participates in 3-amino-2-oxopropyl phosphate binding. His-43 functions as the Proton acceptor in the catalytic mechanism. The 1-deoxy-D-xylulose 5-phosphate site is built by Arg-45 and His-50. Residue Glu-70 is the Proton acceptor of the active site. Thr-100 contributes to the 1-deoxy-D-xylulose 5-phosphate binding site. His-191 serves as the catalytic Proton donor. 3-amino-2-oxopropyl phosphate-binding positions include Gly-192 and 213 to 214 (GH).

Belongs to the PNP synthase family. In terms of assembly, homooctamer; tetramer of dimers.

It is found in the cytoplasm. The catalysed reaction is 3-amino-2-oxopropyl phosphate + 1-deoxy-D-xylulose 5-phosphate = pyridoxine 5'-phosphate + phosphate + 2 H2O + H(+). It participates in cofactor biosynthesis; pyridoxine 5'-phosphate biosynthesis; pyridoxine 5'-phosphate from D-erythrose 4-phosphate: step 5/5. Its function is as follows. Catalyzes the complicated ring closure reaction between the two acyclic compounds 1-deoxy-D-xylulose-5-phosphate (DXP) and 3-amino-2-oxopropyl phosphate (1-amino-acetone-3-phosphate or AAP) to form pyridoxine 5'-phosphate (PNP) and inorganic phosphate. In Nostoc sp. (strain PCC 7120 / SAG 25.82 / UTEX 2576), this protein is Pyridoxine 5'-phosphate synthase.